Reading from the N-terminus, the 198-residue chain is Elongation factor Ts (198 aa).

Residues 82 to 85 (SDFV) form an involved in Mg(2+) ion dislocation from EF-Tu region.

This sequence belongs to the EF-Ts family.

Its subcellular location is the cytoplasm. Associates with the EF-Tu.GDP complex and induces the exchange of GDP to GTP. It remains bound to the aminoacyl-tRNA.EF-Tu.GTP complex up to the GTP hydrolysis stage on the ribosome. This is Elongation factor Ts from Desulfosudis oleivorans (strain DSM 6200 / JCM 39069 / Hxd3) (Desulfococcus oleovorans).